The sequence spans 424 residues: Serine--tRNA ligase (424 aa).

231 to 233 (TAE) serves as a coordination point for L-serine. 262-264 (RAE) contributes to the ATP binding site. E285 contributes to the L-serine binding site. Position 349 to 352 (349 to 352 (EISS)) interacts with ATP. S385 provides a ligand contact to L-serine.

The protein belongs to the class-II aminoacyl-tRNA synthetase family. Type-1 seryl-tRNA synthetase subfamily. In terms of assembly, homodimer. The tRNA molecule binds across the dimer.

It is found in the cytoplasm. The enzyme catalyses tRNA(Ser) + L-serine + ATP = L-seryl-tRNA(Ser) + AMP + diphosphate + H(+). It carries out the reaction tRNA(Sec) + L-serine + ATP = L-seryl-tRNA(Sec) + AMP + diphosphate + H(+). It participates in aminoacyl-tRNA biosynthesis; selenocysteinyl-tRNA(Sec) biosynthesis; L-seryl-tRNA(Sec) from L-serine and tRNA(Sec): step 1/1. Catalyzes the attachment of serine to tRNA(Ser). Is also able to aminoacylate tRNA(Sec) with serine, to form the misacylated tRNA L-seryl-tRNA(Sec), which will be further converted into selenocysteinyl-tRNA(Sec). This chain is Serine--tRNA ligase, found in Geobacillus sp. (strain WCH70).